Here is an 866-residue protein sequence, read N- to C-terminus: MFSMRIVCLVLSVVGTAWTADSGEGDFLAEGGGVRGPRVVERHQSACKDSDWPFCSDEDWNYKCPSGCRMKGLIDEVNQDFTNRINKLKNSLFEYQKNNKDSHSLTTNIMEILRGDFSSANNRDNTYNRVSEDLRSRIEVLKRKVIEKVQHIQLLQKNVRAQLVDMKRLEVDIDIKIRSCRGSCSRALAREVDLKDYEDQQKQLEQVIAKDLLPSRDRQHLPLIKMKPVPDLVPGNFKSQLQKVPPEWKALTDMPQMRMELERPGGNEITRGGSTSYGTGSETESPRNPSSAGSWNSGSSGPGSTGNRNPGSSGTGGTATWKPGSSGPGSTGSWNSGSSGTGSTGNQNPGSPRPGSTGTWNPGSSERGSAGHWTSESSVSGSTGQWHSESGSFRPDSPGSGNARPNNPDWGTFEEVSGNVSPGTRREYHTEKLVTSKGDKELRTGKEKVTSGSTTTTRRSCSKTVTKTVIGPDGHKEVTKEVVTSEDGSDCPEAMDLGTLSGIGTLDGFRHRHPDEAAFFDTASTGKTFPGFFSPMLGEFVSETESRGSESGIFTNTKESSSHHPGIAEFPSRGKSSSYSKQFTSSTSYNRGDSTFESKSYKMADEAGSEADHEGTHSTKRGHAKSRPVRDCDDVLQTHPSGTQSGIFNIKLPGSSKIFSVYCDQETSLGGWLLIQQRMDGSLNFNRTWQDYKRGFGSLNDEGEGEFWLGNDYLHLLTQRGSVLRVELEDWAGNEAYAEYHFRVGSEAEGYALQVSSYEGTAGDALIEGSVEEGAEYTSHNNMQFSTFDRDADQWEENCAEVYGGGWWYNNCQAANLNGIYYPGGSYDPRNNSPYEIENGVVWVSFRGADYSLRAVRMKIRPLVTQ.

The signal sequence occupies residues 1 to 19; the sequence is MFSMRIVCLVLSVVGTAWT. S22 is modified (phosphoserine). The tract at residues 36 to 38 is alpha-chain polymerization, binding distal domain of another fibrin gamma chain; it reads GPR. S45 carries the phosphoserine; by FAM20C modification. S50 carries the phosphoserine modification. A Phosphoserine; by FAM20C modification is found at S56. Residues 68–631 are a coiled coil; it reads CRMKGLIDEV…GHAKSRPVRD (564 aa). Positions 262–460 are disordered; the sequence is ERPGGNEITR…SGSTTTTRRS (199 aa). Low complexity predominate over residues 270-299; it reads TRGGSTSYGTGSETESPRNPSSAGSWNSGS. A phosphoserine mark is found at S281, S291, and S294. O-linked (GalNAc...) threonine glycosylation is present at T320. K322 participates in a covalent cross-link: Isoglutamyl lysine isopeptide (Lys-Gln) (interchain with Q-41 in alpha-2-antiplasmin). Residue Q347 forms an Isoglutamyl lysine isopeptide (Gln-Lys) (interchain with K-?) linkage. O-linked (GalNAc...) serine glycosylation is present at S351. Polar residues predominate over residues 354–391; sequence PGSTGTWNPGSSERGSAGHWTSESSVSGSTGQWHSESG. The residue at position 364 (S364) is a Phosphoserine; by FAM20C. Residue Q385 forms an Isoglutamyl lysine isopeptide (Gln-Lys) (interchain with K-?) linkage. A Phosphothreonine modification is found at T412. Residues 424 to 449 are compositionally biased toward basic and acidic residues; sequence TRREYHTEKLVTSKGDKELRTGKEKV. Over residues 450–460 the composition is skewed to low complexity; sequence TSGSTTTTRRS. S451 bears the Phosphoserine mark. S453 is a glycosylation site (N-linked (GlcNAc...) asparagine; in variant Caracas-2). Residues C461 and C491 are joined by a disulfide bond. Phosphoserine is present on S501. T505 is subject to Phosphothreonine. Phosphoserine; by FAM20C is present on S524. Residues K527 and K558 each participate in an isoglutamyl lysine isopeptide (Lys-Gln) (interchain with Q-?) cross-link. The disordered stretch occupies residues 543–638; that stretch reads ETESRGSESG…VRDCDDVLQT (96 aa). Phosphoserine; by FAM20C is present on S560. Position 565 is a 4-hydroxyproline; by P4HA1 (P565). Residues K575, K581, and K599 each participate in an isoglutamyl lysine isopeptide (Lys-Gln) (interchain with Q-?) cross-link. The segment covering 575–589 has biased composition (low complexity); sequence KSSSYSKQFTSSTSY. Residues 594-617 are compositionally biased toward basic and acidic residues; the sequence is STFESKSYKMADEAGSEADHEGTH. S609 bears the Phosphoserine; by FAM20C mark. Basic residues predominate over residues 618–627; it reads STKRGHAKSR. Positions 623–864 constitute a Fibrinogen C-terminal domain; it reads HAKSRPVRDC…AVRMKIRPLV (242 aa). N-linked (GlcNAc...) asparagine glycosylation is present at N686. Residues D791, D793, W795, and E797 each contribute to the Ca(2+) site. An intrachain disulfide couples C799 to C812.

Heterohexamer; disulfide linked. Contains 2 sets of 3 non-identical chains (alpha, beta and gamma). The 2 heterotrimers are in head to head conformation with the N-termini in a small central domain. In terms of assembly, (Microbial infection) Interacts with Staphylococcus aureus protein Fib; this interaction inhibits fibrinogen-dependent platelet aggregation and protects the bacteria form phagocytosis. In terms of processing, the alpha chain is normally not N-glycosylated, even though glycosylation at Asn-686 was observed when a fragment of the protein was expressed in insect cells. It is well known that heterologous expression of isolated domains can lead to adventitious protein modifications. Besides, glycosylation at Asn-686 is supported by large-scale glycoproteomics studies, but the evidence is still quite tenuous. Most likely, Asn-686 is not glycosylated in the healthy human body, or only with low efficiency. O-glycosylated. Post-translationally, forms F13A-mediated cross-links between a glutamine and the epsilon-amino group of a lysine residue, forming fibronectin-fibrinogen heteropolymers. In terms of processing, about one-third of the alpha chains in the molecules in blood were found to be phosphorylated. Conversion of fibrinogen to fibrin is triggered by thrombin, which cleaves fibrinopeptides A and B from alpha and beta chains, and thus exposes the N-terminal polymerization sites responsible for the formation of the soft clot. The soft clot is converted into the hard clot by factor XIIIA which catalyzes the epsilon-(gamma-glutamyl)lysine cross-linking between gamma chains (stronger) and between alpha chains (weaker) of different monomers. Post-translationally, phosphorylated by FAM20C in the extracellular medium. Detected in blood plasma (at protein level).

It is found in the secreted. In terms of biological role, cleaved by the protease thrombin to yield monomers which, together with fibrinogen beta (FGB) and fibrinogen gamma (FGG), polymerize to form an insoluble fibrin matrix. Fibrin has a major function in hemostasis as one of the primary components of blood clots. In addition, functions during the early stages of wound repair to stabilize the lesion and guide cell migration during re-epithelialization. Was originally thought to be essential for platelet aggregation, based on in vitro studies using anticoagulated blood. However, subsequent studies have shown that it is not absolutely required for thrombus formation in vivo. Enhances expression of SELP in activated platelets via an ITGB3-dependent pathway. Maternal fibrinogen is essential for successful pregnancy. Fibrin deposition is also associated with infection, where it protects against IFNG-mediated hemorrhage. May also facilitate the immune response via both innate and T-cell mediated pathways. This Homo sapiens (Human) protein is Fibrinogen alpha chain (FGA).